The primary structure comprises 579 residues: MFSLRSLVDYLRVQRELIDIYTPVDPYLEIAEIHRRVVENEGPALLFHHVKGSPFPVLTNLFGTQKRVDLLFPDLSSGIFDQIAILLSSPPSFSSLWQHRSLLKRGLSSLGLRKQRFRPSPFLHQDAPNLLQLPMLTSWPEDGGPFLTLPLVYTQSPENGIPNLGMYRMQRFDEQTLGLHFQIQKGGGAHFFEAEQKQQNLPVTIFLSGNPFLILSAIAPLPENVPELLFCSFLQNKKLSFVKKAPLSNHPLLCDAEFILTGEALAGKRRPEGPFGDHFGYYSLTHDFPIFNCQHLYHKKDAIYPATIVGKPFQEDFFLGNKLQEILSPLFPLIMPGVQDLKSYGEAGFHAVAAAVVKERYWKEALRSALRILGEGQLSLTKFLWITDQSVDLNNFPSLLECVLKRMRFDQDLIIISDTANDTLDYTGPALNKGSRGIFLGVGTPIRSLPRHYQGPSLPGVSRIGVFCXGCLVLETSIQQINIPLLLKESHLEQWPLIVLVEDLSKTLSDTKEFLWRTFTRSSPATDLHIPVSHVTNHKISYRPPMILNALMKPSYPKEVEADEETKKHVSSRWDKYFS.

It belongs to the UbiD family.

This is an uncharacterized protein from Chlamydia muridarum (strain MoPn / Nigg).